We begin with the raw amino-acid sequence, 213 residues long: Thymidylate kinase (213 aa).

ATP is bound at residue 11–18 (GPEGAGKT).

The protein belongs to the thymidylate kinase family.

The enzyme catalyses dTMP + ATP = dTDP + ADP. Functionally, phosphorylation of dTMP to form dTDP in both de novo and salvage pathways of dTTP synthesis. This is Thymidylate kinase from Leuconostoc mesenteroides subsp. mesenteroides (strain ATCC 8293 / DSM 20343 / BCRC 11652 / CCM 1803 / JCM 6124 / NCDO 523 / NBRC 100496 / NCIMB 8023 / NCTC 12954 / NRRL B-1118 / 37Y).